Here is a 269-residue protein sequence, read N- to C-terminus: Formamidopyrimidine-DNA glycosylase (269 aa).

The active-site Schiff-base intermediate with DNA is P2. The active-site Proton donor is the E3. K58 (proton donor; for beta-elimination activity) is an active-site residue. DNA contacts are provided by H91, R110, and K150. The FPG-type zinc finger occupies S235–T269. R259 serves as the catalytic Proton donor; for delta-elimination activity.

Belongs to the FPG family. In terms of assembly, monomer. Zn(2+) is required as a cofactor.

The enzyme catalyses Hydrolysis of DNA containing ring-opened 7-methylguanine residues, releasing 2,6-diamino-4-hydroxy-5-(N-methyl)formamidopyrimidine.. The catalysed reaction is 2'-deoxyribonucleotide-(2'-deoxyribose 5'-phosphate)-2'-deoxyribonucleotide-DNA = a 3'-end 2'-deoxyribonucleotide-(2,3-dehydro-2,3-deoxyribose 5'-phosphate)-DNA + a 5'-end 5'-phospho-2'-deoxyribonucleoside-DNA + H(+). In terms of biological role, involved in base excision repair of DNA damaged by oxidation or by mutagenic agents. Acts as a DNA glycosylase that recognizes and removes damaged bases. Has a preference for oxidized purines, such as 7,8-dihydro-8-oxoguanine (8-oxoG). Has AP (apurinic/apyrimidinic) lyase activity and introduces nicks in the DNA strand. Cleaves the DNA backbone by beta-delta elimination to generate a single-strand break at the site of the removed base with both 3'- and 5'-phosphates. This chain is Formamidopyrimidine-DNA glycosylase, found in Ruthia magnifica subsp. Calyptogena magnifica.